The sequence spans 332 residues: Probable allantoicase (332 aa).

Belongs to the allantoicase family.

The catalysed reaction is allantoate + H2O = (S)-ureidoglycolate + urea. It participates in nitrogen metabolism; (S)-allantoin degradation; (S)-ureidoglycolate from allantoate (aminidohydrolase route): step 1/1. The chain is Probable allantoicase from Pseudomonas aeruginosa (strain UCBPP-PA14).